The chain runs to 62 residues: Large ribosomal subunit protein bL28 (62 aa).

This sequence belongs to the bacterial ribosomal protein bL28 family.

The protein is Large ribosomal subunit protein bL28 of Streptococcus thermophilus (strain CNRZ 1066).